The primary structure comprises 803 residues: Carbon monoxide dehydrogenase large chain (803 aa).

Arg-384 carries the 4-hydroxyarginine modification. Cys-385 is a Cu(+) binding site. Glu-757 contacts Mo-molybdopterin cytosine dinucleotide.

As to quaternary structure, dimer of heterotrimers. Each heterotrimer consists of a large, a medium and a small subunit. Requires Cu(+) as cofactor. Mo-molybdopterin cytosine dinucleotide serves as cofactor.

The catalysed reaction is CO + a quinone + H2O = a quinol + CO2. Catalyzes the oxidation of carbon monoxide to carbon dioxide. This Hydrogenophaga pseudoflava (Pseudomonas carboxydoflava) protein is Carbon monoxide dehydrogenase large chain (cutL).